We begin with the raw amino-acid sequence, 645 residues long: Putative bifunctional exonuclease/endonuclease protein MT2247 (645 aa).

The Exonuclease domain maps to 44–207 (VVVDLETTGG…DDARATVDVL (164 aa)). Residues 248-326 (HRPGVYLFRG…LSTHAPPYNR (79 aa)) form the GIY-YIG domain. The segment at 603-645 (WQSDLPTEPHPSREQLFGRTGVDCRTGPPQPLLPGRQPFSTAG) is disordered. The segment covering 635 to 645 (LPGRQPFSTAG) has biased composition (low complexity).

This chain is Putative bifunctional exonuclease/endonuclease protein MT2247, found in Mycobacterium tuberculosis (strain CDC 1551 / Oshkosh).